The primary structure comprises 305 residues: MNRLLKTIIENNRKWISEGKVASYIPELSKMDKNLLGISVCTLGGEEYWEGDAEVKFTIQSISKIVTLMLAIIDNGEDYVFSKVGMEPTETAFNSIVNLEAKESHKPINPMINAGAIVVASMVAGKDSDEKFDRILKFTRKISGNNNIDINLNVYKSEKETGHRNRALAYFMKSTGALKGNVEEILDVYFKQCSIEITCKDLARIGVMLANDGVSPYTGDRIVPRHVARIVKTIMVTCGMYDASGNFAVHIGIPAKSGVGGGIVACAPRRMGIGVLGTALDEKGNSIAGTKILEELSKQLDLSIF.

Substrate is bound by residues Ser61, Asn113, Glu158, Asn165, Tyr189, Tyr241, and Val259.

It belongs to the glutaminase family. As to quaternary structure, homotetramer.

The enzyme catalyses L-glutamine + H2O = L-glutamate + NH4(+). The protein is Glutaminase of Clostridium botulinum (strain Kyoto / Type A2).